The sequence spans 178 residues: Bifunctional protein PyrR (178 aa).

The PRPP-binding signature appears at V99–T111.

Belongs to the purine/pyrimidine phosphoribosyltransferase family. PyrR subfamily.

It catalyses the reaction UMP + diphosphate = 5-phospho-alpha-D-ribose 1-diphosphate + uracil. Its function is as follows. Regulates the transcription of the pyrimidine nucleotide (pyr) operon in response to exogenous pyrimidines. Functionally, also displays a weak uracil phosphoribosyltransferase activity which is not physiologically significant. This chain is Bifunctional protein PyrR, found in Nostoc punctiforme (strain ATCC 29133 / PCC 73102).